The primary structure comprises 501 residues: 2,3-bisphosphoglycerate-independent phosphoglycerate mutase (501 aa).

Positions 12 and 62 each coordinate Mn(2+). Serine 62 (phosphoserine intermediate) is an active-site residue. Residues histidine 121, 150–151, arginine 182, arginine 188, 253–256, and lysine 323 each bind substrate; these read RD and RSDR. 5 residues coordinate Mn(2+): aspartate 390, histidine 394, aspartate 431, histidine 432, and histidine 450.

The protein belongs to the BPG-independent phosphoglycerate mutase family. Monomer. Mn(2+) serves as cofactor.

The enzyme catalyses (2R)-2-phosphoglycerate = (2R)-3-phosphoglycerate. It functions in the pathway carbohydrate degradation; glycolysis; pyruvate from D-glyceraldehyde 3-phosphate: step 3/5. In terms of biological role, catalyzes the interconversion of 2-phosphoglycerate and 3-phosphoglycerate. The polypeptide is 2,3-bisphosphoglycerate-independent phosphoglycerate mutase (Ehrlichia canis (strain Jake)).